We begin with the raw amino-acid sequence, 331 residues long: Ribosomal RNA small subunit methyltransferase C (331 aa).

The protein belongs to the methyltransferase superfamily. RsmC family. As to quaternary structure, monomer.

Its subcellular location is the cytoplasm. It catalyses the reaction guanosine(1207) in 16S rRNA + S-adenosyl-L-methionine = N(2)-methylguanosine(1207) in 16S rRNA + S-adenosyl-L-homocysteine + H(+). Functionally, specifically methylates the guanine in position 1207 of 16S rRNA in the 30S particle. This chain is Ribosomal RNA small subunit methyltransferase C, found in Ectopseudomonas mendocina (strain ymp) (Pseudomonas mendocina).